The primary structure comprises 358 residues: L-tryptophan methyltransferase trpM (358 aa).

The protein belongs to the methyltransferase superfamily.

It catalyses the reaction L-tryptophan + S-adenosyl-L-methionine = N(alpha)-methyl-L-tryptophan + S-adenosyl-L-homocysteine + H(+). The enzyme catalyses N(alpha)-methyl-L-tryptophan + S-adenosyl-L-methionine = N(alpha),N(alpha)-dimethyl-L-tryptophan + S-adenosyl-L-homocysteine + H(+). It carries out the reaction N(alpha),N(alpha)-dimethyl-L-tryptophan + S-adenosyl-L-methionine = N(alpha),N(alpha),N(alpha)-trimethyl-L-tryptophan + S-adenosyl-L-homocysteine + H(+). Methyltransferase that catalyzes iterative L-tryptophan N-methylations to produce L-abrine (N-alpha-methyl-L-tryptophan) and N,N-alpha-dimethyl-L-tryptophan. Also catalyzes a third methylation to yield L-hypaphorine (N,N,N-alpha-trimethyl-L-tryptopan), an agonist of the phytohormone indole-3-acetic acid. Can also N-methylate the non-native amino acid substrate 4-hydroxytryptophan, but the ability to incorporate trpM into a functional psilocybin biosynthesis pathway is indeed thwarted by the inability of the L-tryptophan decarboxylase psiD to use N,N-dimethyl-4-hydroxytryptophan as substrate. This Psilocybe serbica protein is L-tryptophan methyltransferase trpM.